The primary structure comprises 482 residues: UDP-N-acetylmuramate--L-alanine ligase (482 aa).

129–135 (GTHGKTT) is an ATP binding site.

It belongs to the MurCDEF family.

It localises to the cytoplasm. The catalysed reaction is UDP-N-acetyl-alpha-D-muramate + L-alanine + ATP = UDP-N-acetyl-alpha-D-muramoyl-L-alanine + ADP + phosphate + H(+). The protein operates within cell wall biogenesis; peptidoglycan biosynthesis. Functionally, cell wall formation. The sequence is that of UDP-N-acetylmuramate--L-alanine ligase from Acinetobacter baumannii (strain SDF).